We begin with the raw amino-acid sequence, 322 residues long: NADH-cytochrome b5 reductase 2 (322 aa).

Residues 32–48 (LAPIYISVGLAGLGVGL) form a helical membrane-spanning segment. The FAD-binding FR-type domain occupies 72–176 (QGWVDLKLSE…KGPIPKYPWE (105 aa)). 179–214 (KHKHICLIAGGTGITPMYQLARQIFKNPEDQTKVTL) lines the FAD pocket.

This sequence belongs to the flavoprotein pyridine nucleotide cytochrome reductase family. FAD is required as a cofactor.

The protein localises to the mitochondrion outer membrane. The catalysed reaction is 2 Fe(III)-[cytochrome b5] + NADH = 2 Fe(II)-[cytochrome b5] + NAD(+) + H(+). In terms of biological role, may mediate the reduction of outer membrane cytochrome b5. This chain is NADH-cytochrome b5 reductase 2 (mcr1), found in Aspergillus clavatus (strain ATCC 1007 / CBS 513.65 / DSM 816 / NCTC 3887 / NRRL 1 / QM 1276 / 107).